Consider the following 302-residue polypeptide: Stanniocalcin-2 (302 aa).

An N-terminal signal peptide occupies residues 1-24 (MCAERLGQFMTLALVLATFDPARG). The segment at 23 to 44 (RGTDATNPPEGPQDRSSQQKGR) is disordered. Residue Asn73 is glycosylated (N-linked (GlcNAc...) asparagine). Residues 217-302 (KPPTAPPERQ…EQSEYSDIRR (86 aa)) are disordered. A compositionally biased stretch (basic and acidic residues) spans 227–264 (PQVDRTKLSRAHHGEAGHHLPEPSSRETGRGAKGERGS). Phosphoserine; by FAM20C is present on residues Ser250 and Ser251. Thr254 carries the phosphothreonine; by FAM20C modification.

The protein belongs to the stanniocalcin family. Homodimer; disulfide-linked. In terms of tissue distribution, expressed in a variety of tissues including muscle, heart, pancreas, kidney, spleen, prostate, small intestine, colon and peripheral blood leukocytes.

It localises to the secreted. Functionally, has an anti-hypocalcemic action on calcium and phosphate homeostasis. In Homo sapiens (Human), this protein is Stanniocalcin-2 (STC2).